The chain runs to 908 residues: Protein translocase subunit SecA (908 aa).

ATP contacts are provided by residues Gln87, 105 to 109, and Asp511; that span reads GEGKT. The segment covering 559–570 has biased composition (basic and acidic residues); it reads ERHESRRIDNQL. Disordered regions lie at residues 559 to 582 and 841 to 908; these read ERHESRRIDNQLRGRSGRQGDPGS and RRRR…GRLE. Low complexity predominate over residues 847-856; that stretch reads LAQQMQRAQA. Positions 862-873 are enriched in acidic residues; that stretch reads TEEDSDAEEQAE. The Zn(2+) site is built by Cys892, Cys894, Cys903, and His904. Residues 898-908 are compositionally biased toward basic residues; that stretch reads KKYKQCHGRLE.

Belongs to the SecA family. As to quaternary structure, monomer and homodimer. Part of the essential Sec protein translocation apparatus which comprises SecA, SecYEG and auxiliary proteins SecDF-YajC and YidC. The cofactor is Zn(2+).

Its subcellular location is the cell inner membrane. The protein localises to the cytoplasm. The enzyme catalyses ATP + H2O + cellular proteinSide 1 = ADP + phosphate + cellular proteinSide 2.. Functionally, part of the Sec protein translocase complex. Interacts with the SecYEG preprotein conducting channel. Has a central role in coupling the hydrolysis of ATP to the transfer of proteins into and across the cell membrane, serving both as a receptor for the preprotein-SecB complex and as an ATP-driven molecular motor driving the stepwise translocation of polypeptide chains across the membrane. This is Protein translocase subunit SecA from Hahella chejuensis (strain KCTC 2396).